Here is a 238-residue protein sequence, read N- to C-terminus: Ribonuclease PH (238 aa).

Phosphate is bound by residues arginine 86 and 124-126 (GTR).

The protein belongs to the RNase PH family. Homohexameric ring arranged as a trimer of dimers.

It catalyses the reaction tRNA(n+1) + phosphate = tRNA(n) + a ribonucleoside 5'-diphosphate. Its function is as follows. Phosphorolytic 3'-5' exoribonuclease that plays an important role in tRNA 3'-end maturation. Removes nucleotide residues following the 3'-CCA terminus of tRNAs; can also add nucleotides to the ends of RNA molecules by using nucleoside diphosphates as substrates, but this may not be physiologically important. Probably plays a role in initiation of 16S rRNA degradation (leading to ribosome degradation) during starvation. The protein is Ribonuclease PH of Dichelobacter nodosus (strain VCS1703A).